The primary structure comprises 134 residues: Cilia- and flagella-associated protein 144 (134 aa).

A disordered region spans residues 76-95 (QGPRKKYPETQTENQEVGWD).

It belongs to the CFAP144 family. Microtubule inner protein component of sperm flagellar doublet microtubules.

It localises to the cytoplasm. It is found in the cytoskeleton. The protein localises to the cilium axoneme. Its subcellular location is the flagellum axoneme. Functionally, microtubule inner protein (MIP) part of the dynein-decorated doublet microtubules (DMTs) in cilia axoneme, which is required for motile cilia beating. This chain is Cilia- and flagella-associated protein 144, found in Homo sapiens (Human).